We begin with the raw amino-acid sequence, 269 residues long: MAARTRSLVERRRVLMAGVRSHTRFYKALAEEVREFHATKICGTLLTLLSGSLQGRSVFEATRVTLICEVDLGPRRPDCICVFEFANDKTLGGVCVIIELKTCKYISSGDTASKREQRATGMKQLRHSLKLLQSLAPPGDKIVYLCPVLVFVAQRTLRVSRVTRLVPQKVSGNITAVVRMLQSLSTYTVPIEPRTQRARRRRGGAARGSASRPKRSHSGARDPPESAARQLPPADQTPTSTEGGGVLKRIAALFCVPVATKTKPRAASE.

The segment at 191–244 (IEPRTQRARRRRGGAARGSASRPKRSHSGARDPPESAARQLPPADQTPTSTEGG) is disordered.

This sequence belongs to the herpesviridae UL24 family.

It localises to the virion. Its subcellular location is the host cytoplasm. The protein resides in the host nucleus. It is found in the host nucleolus. The protein localises to the host Golgi apparatus. Functionally, may participate in nuclear egress of viral particles. Plays a role in the dispersal of several host nucleolar proteins including NCL/nucleolin and NPM1. Since deletion of host NCL/nucleolin negatively impact on nuclear egress, UL24 supposedly acts on this process through its effect on host nucleoli. This Homo sapiens (Human) protein is Protein UL24.